We begin with the raw amino-acid sequence, 191 residues long: Cathelicidin-related peptide Oh-Cath (191 aa).

The first 22 residues, 1-22 (MEGFFWKTLLVVGALAIGGTSS), serve as a signal peptide directing secretion. Residues 23 to 161 (LPHKPLTYEE…DQPRRVKRFK (139 aa)) constitute a propeptide that is removed on maturation. 2 cysteine pairs are disulfide-bonded: Cys81–Cys92 and Cys103–Cys120. The span at 125-151 (EEEEQKQEEGNEEEKEVEKEEKEEDEK) shows a compositional bias: acidic residues. The segment at 125–154 (EEEEQKQEEGNEEEKEVEKEEKEEDEKDQP) is disordered.

It belongs to the cathelicidin family. In terms of tissue distribution, expressed by the venom gland.

The protein localises to the secreted. It localises to the target cell membrane. In terms of biological role, potent antimicrobial peptide against Gram-negative (MIC=0.25 ug/ml against E.coli ATCC 25922, MIC=0.5 ug/ml against P.aeruginosa) and Gram-positive bacteria (MIC=64 ug/ml against E.faecalis, MIC=64 ug/ml against S.aureus). Adopts an amphipathic alpha helical conformation, that may allow to partition into the target membrane. Low hemolytic activities have been observed on mammalian cells. The protein is Cathelicidin-related peptide Oh-Cath of Ophiophagus hannah (King cobra).